Here is a 314-residue protein sequence, read N- to C-terminus: Carbamate kinase (314 aa).

This sequence belongs to the carbamate kinase family. As to quaternary structure, homodimer.

The protein resides in the cytoplasm. It carries out the reaction hydrogencarbonate + NH4(+) + ATP = carbamoyl phosphate + ADP + H2O + H(+). Its pathway is metabolic intermediate metabolism; carbamoyl phosphate degradation; CO(2) and NH(3) from carbamoyl phosphate: step 1/1. The polypeptide is Carbamate kinase (arcC) (Clostridium perfringens (strain 13 / Type A)).